The primary structure comprises 316 residues: Ribosomal RNA small subunit methyltransferase H (316 aa).

S-adenosyl-L-methionine contacts are provided by residues 39-41 (GGH), D56, F82, D103, and Q110.

This sequence belongs to the methyltransferase superfamily. RsmH family.

The protein resides in the cytoplasm. It carries out the reaction cytidine(1402) in 16S rRNA + S-adenosyl-L-methionine = N(4)-methylcytidine(1402) in 16S rRNA + S-adenosyl-L-homocysteine + H(+). Its function is as follows. Specifically methylates the N4 position of cytidine in position 1402 (C1402) of 16S rRNA. The protein is Ribosomal RNA small subunit methyltransferase H of Methylacidiphilum infernorum (isolate V4) (Methylokorus infernorum (strain V4)).